A 220-amino-acid polypeptide reads, in one-letter code: Putative NAD(P)H nitroreductase (220 aa).

NAD(+) is bound at residue 155–160 (GASALG).

The protein belongs to the nitroreductase family. It depends on FMN as a cofactor.

This is Putative NAD(P)H nitroreductase from Haemophilus influenzae (strain ATCC 51907 / DSM 11121 / KW20 / Rd).